A 232-amino-acid chain; its full sequence is Peptidyl-prolyl cis-trans isomerase FKBP18, chloroplastic (232 aa).

A PPIase FKBP-type domain is found at 108–226 (GSTAQVHFDC…ELNIELLRVT (119 aa)).

This sequence belongs to the FKBP-type PPIase family.

It is found in the plastid. It localises to the chloroplast thylakoid lumen. The catalysed reaction is [protein]-peptidylproline (omega=180) = [protein]-peptidylproline (omega=0). In terms of biological role, PPIases accelerate the folding of proteins. It catalyzes the cis-trans isomerization of proline imidic peptide bonds in oligopeptides. In Arabidopsis thaliana (Mouse-ear cress), this protein is Peptidyl-prolyl cis-trans isomerase FKBP18, chloroplastic (FKBP18).